The following is a 304-amino-acid chain: Homoserine kinase (304 aa).

90–100 is a binding site for ATP; it reads PLARGLGSSAS.

This sequence belongs to the GHMP kinase family. Homoserine kinase subfamily.

It is found in the cytoplasm. It carries out the reaction L-homoserine + ATP = O-phospho-L-homoserine + ADP + H(+). It functions in the pathway amino-acid biosynthesis; L-threonine biosynthesis; L-threonine from L-aspartate: step 4/5. Catalyzes the ATP-dependent phosphorylation of L-homoserine to L-homoserine phosphate. The sequence is that of Homoserine kinase from Staphylococcus aureus (strain NCTC 8325 / PS 47).